A 101-amino-acid chain; its full sequence is Small ribosomal subunit protein bS18c (101 aa).

The protein belongs to the bacterial ribosomal protein bS18 family. Part of the 30S ribosomal subunit.

It localises to the plastid. Its subcellular location is the chloroplast. The protein is Small ribosomal subunit protein bS18c of Guizotia abyssinica (Niger).